Here is an 89-residue protein sequence, read N- to C-terminus: Putative regulatory protein MAE_11840 (89 aa).

This sequence belongs to the RemA family.

The polypeptide is Putative regulatory protein MAE_11840 (Microcystis aeruginosa (strain NIES-843 / IAM M-2473)).